An 865-amino-acid chain; its full sequence is MLEEYRKHVAERAAQGIVPKPLDATQMAALVELLKTPPVGEEEFLLDLLINRVPPGVDEAAYVKAGFLAAVAKGDTTSPLVSPEKAIELLGTMQGGYNIHPLIDALDDAKLAPIAAKALSHTLLMFDNFYDVEEKAKAGNEYAKQVMQSWADAEWFLSRPPLAEKITVTVFKVTGETNTDDLSPAPDAWSRPDIPLHAQAMLKNAREGIEPDQPGVVGPIKQIEALQKKGYPLAYVGDVVGTGSSRKSATNSVLWFMGDDIPNVPNKRGGGLCLGGKIAPIFFNTMEDAGALPIEVDVSNLNMGDVIDVYPYKGEVRNHETGELLATFELKTDVLIDEVRAGGRIPLIIGRGLTTKAREALGLPHSDVFRQAKDVAESSRGFSLAQKMVGRACGVKGIRPGAYCEPKMTSVGSQDTTGPMTRDELKDLACLGFSADLVMQSFCHTAAYPKPVDVTTHHTLPDFIMNRGGVSLRPGDGVIHSWLNRMLLPDTVGTGGDSHTRFPIGISFPAGSGLVAFAAATGVMPLDMPESVLVRFKGKMQPGITLRDLVHAIPLYAIKQGLLTVEKKGKKNIFSGRILEIEGLPDLKVEQAFELTDASAERSAAGCTIKLNKEPIVEYLTSNIVLLKWMIAEGYGDRRTLERRIQGMEKWLADPQLLEADADAEYAAVIDIDLADIKEPILCAPNDPDDARLLSDVQGEKIDEVFIGSCMTNIGHFRAAGKLLDNHKGQLPTRLWVAPPTRMDAAQLTEEGYYSVFGKSGARIEIPGCSLCMGNQARVADGATVVSTSTRNFPNRLGTGANVFLASAELAAVAALIGKLPTPEEYQTYVAQVDKTAVDTYRYLNFDQLSQYTEKADGVIFQTAV.

Residues arginine 191, 244–246 (SSR), 414–416 (QDT), and serine 498 each bind substrate. 3 residues coordinate [4Fe-4S] cluster: cysteine 710, cysteine 769, and cysteine 772. Positions 791 and 796 each coordinate substrate.

Belongs to the aconitase/IPM isomerase family. Monomer. [4Fe-4S] cluster serves as cofactor.

The enzyme catalyses citrate = D-threo-isocitrate. It carries out the reaction (2S,3R)-3-hydroxybutane-1,2,3-tricarboxylate = 2-methyl-cis-aconitate + H2O. It functions in the pathway carbohydrate metabolism; tricarboxylic acid cycle; isocitrate from oxaloacetate: step 2/2. It participates in organic acid metabolism; propanoate degradation. Its function is as follows. Involved in the catabolism of short chain fatty acids (SCFA) via the tricarboxylic acid (TCA)(acetyl degradation route) and the 2-methylcitrate cycle I (propionate degradation route). Catalyzes the reversible isomerization of citrate to isocitrate via cis-aconitate. Also catalyzes the hydration of 2-methyl-cis-aconitate to yield (2R,3S)-2-methylisocitrate. The apo form of AcnB functions as a RNA-binding regulatory protein which regulates FliC synthesis via interaction with the ftsH transcript to decrease the intracellular levels of FtsH. The lower levels of FtsH protease activity then influence sigma-32, DnaK and ultimately FliC production. This is Aconitate hydratase B (acnB) from Salmonella typhimurium (strain LT2 / SGSC1412 / ATCC 700720).